Reading from the N-terminus, the 137-residue chain is Proofreading thioesterase EntH (137 aa).

Residue Glu-63 is the Nucleophile or proton acceptor of the active site.

It belongs to the thioesterase PaaI family. Homotetramer. Dimer of dimers. Interacts specifically with the aryl carrier protein (ArCP) domain of EntB.

It localises to the cytoplasm. It functions in the pathway siderophore biosynthesis; enterobactin biosynthesis. Its function is as follows. Required for optimal enterobactin synthesis. Acts as a proofreading enzyme that prevents EntB misacylation by hydrolyzing the thioester bound existing between EntB and wrongly charged molecules. This chain is Proofreading thioesterase EntH, found in Salmonella paratyphi A (strain AKU_12601).